Here is a 64-residue protein sequence, read N- to C-terminus: Long neurotoxin MS2 (64 aa).

5 disulfides stabilise this stretch: Cys-3–Cys-24, Cys-6–Cys-11, Cys-17–Cys-41, Cys-45–Cys-57, and Cys-58–Cys-63.

The protein belongs to the three-finger toxin family. Ancestral subfamily. Expressed by the venom gland.

It is found in the secreted. Functionally, produces peripheral paralysis by blocking neuromuscular transmission at the postsynaptic site. Very weak inhibitor of the endogenous nicotinic acetylcholine receptors (nAChR) in the human rhabdomyosarcoma TE 671 cell line. Not toxic to mice by intraperitoneal injection or to zebrafish by injection at the back of the dorsolateral region. The polypeptide is Long neurotoxin MS2 (Micrurus surinamensis (Surinam coral snake)).